Reading from the N-terminus, the 539-residue chain is Peptide chain release factor 3 (539 aa).

The tr-type G domain maps to 14 to 283 (EKRRNFAIIS…AFLEYALQPE (270 aa)). GTP-binding positions include 23–30 (SHPDAGKT), 91–95 (DTPGH), and 145–148 (NKLD).

It belongs to the TRAFAC class translation factor GTPase superfamily. Classic translation factor GTPase family. PrfC subfamily.

Its subcellular location is the cytoplasm. In terms of biological role, increases the formation of ribosomal termination complexes and stimulates activities of RF-1 and RF-2. It binds guanine nucleotides and has strong preference for UGA stop codons. It may interact directly with the ribosome. The stimulation of RF-1 and RF-2 is significantly reduced by GTP and GDP, but not by GMP. The chain is Peptide chain release factor 3 from Rippkaea orientalis (strain PCC 8801 / RF-1) (Cyanothece sp. (strain PCC 8801)).